The chain runs to 153 residues: Small ribosomal subunit protein uS13 (153 aa).

Belongs to the universal ribosomal protein uS13 family. In terms of assembly, part of the 30S ribosomal subunit. Forms a loose heterodimer with protein S19. Forms two bridges to the 50S subunit in the 70S ribosome.

Its function is as follows. Located at the top of the head of the 30S subunit, it contacts several helices of the 16S rRNA. In the 70S ribosome it contacts the 23S rRNA (bridge B1a) and protein L5 of the 50S subunit (bridge B1b), connecting the 2 subunits; these bridges are implicated in subunit movement. This Pyrobaculum calidifontis (strain DSM 21063 / JCM 11548 / VA1) protein is Small ribosomal subunit protein uS13.